The following is a 180-amino-acid chain: ATP synthase subunit delta (180 aa).

The protein belongs to the ATPase delta chain family. In terms of assembly, F-type ATPases have 2 components, F(1) - the catalytic core - and F(0) - the membrane proton channel. F(1) has five subunits: alpha(3), beta(3), gamma(1), delta(1), epsilon(1). F(0) has three main subunits: a(1), b(2) and c(10-14). The alpha and beta chains form an alternating ring which encloses part of the gamma chain. F(1) is attached to F(0) by a central stalk formed by the gamma and epsilon chains, while a peripheral stalk is formed by the delta and b chains.

It is found in the cell inner membrane. F(1)F(0) ATP synthase produces ATP from ADP in the presence of a proton or sodium gradient. F-type ATPases consist of two structural domains, F(1) containing the extramembraneous catalytic core and F(0) containing the membrane proton channel, linked together by a central stalk and a peripheral stalk. During catalysis, ATP synthesis in the catalytic domain of F(1) is coupled via a rotary mechanism of the central stalk subunits to proton translocation. Its function is as follows. This protein is part of the stalk that links CF(0) to CF(1). It either transmits conformational changes from CF(0) to CF(1) or is implicated in proton conduction. The chain is ATP synthase subunit delta from Chlorobium phaeobacteroides (strain BS1).